Reading from the N-terminus, the 133-residue chain is Oocytes ribonuclease (133 aa).

A signal peptide spans 1–22; that stretch reads MCAKSLLLVFGILLGLSHLSLS. Position 23 is a pyrrolidone carboxylic acid (glutamine 23). The active-site Proton acceptor is the histidine 32. Disulfide bonds link cysteine 41–cysteine 93, cysteine 56–cysteine 103, cysteine 74–cysteine 118, and cysteine 115–cysteine 132. 57-61 contacts substrate; the sequence is KRVNT. Catalysis depends on histidine 125, which acts as the Proton donor.

The protein belongs to the pancreatic ribonuclease family. Monomer.

It localises to the secreted. In terms of biological role, preferentially cleaves single-stranded RNA at pyrimidine residues with a 3'flanking guanine. Hydrolyzes poly(U) and poly(C) as substrates, and prefers the former. The S-lectins in frog eggs may be involved in the fertilization and development of the frog embryo. This lectin agglutinates various animal cells, including normal lymphocytes, erythrocytes, and fibroblasts of animal and human origin. It is cytotoxic against several tumor cells. The polypeptide is Oocytes ribonuclease (RCR) (Aquarana catesbeiana (American bullfrog)).